The following is a 153-amino-acid chain: 6,7-dimethyl-8-ribityllumazine synthase (153 aa).

Residues F22, 56-58 (AFE), and 80-82 (AVI) contribute to the 5-amino-6-(D-ribitylamino)uracil site. 85-86 (GT) contacts (2S)-2-hydroxy-3-oxobutyl phosphate. The active-site Proton donor is the H88. F113 contacts 5-amino-6-(D-ribitylamino)uracil. R127 serves as a coordination point for (2S)-2-hydroxy-3-oxobutyl phosphate.

Belongs to the DMRL synthase family. As to quaternary structure, forms an icosahedral capsid composed of 60 subunits, arranged as a dodecamer of pentamers.

The enzyme catalyses (2S)-2-hydroxy-3-oxobutyl phosphate + 5-amino-6-(D-ribitylamino)uracil = 6,7-dimethyl-8-(1-D-ribityl)lumazine + phosphate + 2 H2O + H(+). It participates in cofactor biosynthesis; riboflavin biosynthesis; riboflavin from 2-hydroxy-3-oxobutyl phosphate and 5-amino-6-(D-ribitylamino)uracil: step 1/2. In terms of biological role, catalyzes the formation of 6,7-dimethyl-8-ribityllumazine by condensation of 5-amino-6-(D-ribitylamino)uracil with 3,4-dihydroxy-2-butanone 4-phosphate. This is the penultimate step in the biosynthesis of riboflavin. The chain is 6,7-dimethyl-8-ribityllumazine synthase from Hydrogenovibrio crunogenus (strain DSM 25203 / XCL-2) (Thiomicrospira crunogena).